Reading from the N-terminus, the 225-residue chain is Phosphatidylserine decarboxylase proenzyme (225 aa).

S195 acts as the Schiff-base intermediate with substrate; via pyruvic acid in catalysis. S195 bears the Pyruvic acid (Ser); by autocatalysis mark.

The protein belongs to the phosphatidylserine decarboxylase family. PSD-A subfamily. In terms of assembly, heterodimer of a large membrane-associated beta subunit and a small pyruvoyl-containing alpha subunit. Pyruvate serves as cofactor. In terms of processing, is synthesized initially as an inactive proenzyme. Formation of the active enzyme involves a self-maturation process in which the active site pyruvoyl group is generated from an internal serine residue via an autocatalytic post-translational modification. Two non-identical subunits are generated from the proenzyme in this reaction, and the pyruvate is formed at the N-terminus of the alpha chain, which is derived from the carboxyl end of the proenzyme. The post-translation cleavage follows an unusual pathway, termed non-hydrolytic serinolysis, in which the side chain hydroxyl group of the serine supplies its oxygen atom to form the C-terminus of the beta chain, while the remainder of the serine residue undergoes an oxidative deamination to produce ammonia and the pyruvoyl prosthetic group on the alpha chain.

The protein resides in the cell membrane. The catalysed reaction is a 1,2-diacyl-sn-glycero-3-phospho-L-serine + H(+) = a 1,2-diacyl-sn-glycero-3-phosphoethanolamine + CO2. Its pathway is phospholipid metabolism; phosphatidylethanolamine biosynthesis; phosphatidylethanolamine from CDP-diacylglycerol: step 2/2. Functionally, catalyzes the formation of phosphatidylethanolamine (PtdEtn) from phosphatidylserine (PtdSer). In Gluconacetobacter diazotrophicus (strain ATCC 49037 / DSM 5601 / CCUG 37298 / CIP 103539 / LMG 7603 / PAl5), this protein is Phosphatidylserine decarboxylase proenzyme.